We begin with the raw amino-acid sequence, 67 residues long: Bowman-Birk type major trypsin inhibitor (67 aa).

Intrachain disulfides connect cysteine 8–cysteine 63, cysteine 9–cysteine 24, cysteine 14–cysteine 22, cysteine 31–cysteine 38, and cysteine 35–cysteine 51.

This sequence belongs to the Bowman-Birk serine protease inhibitor family.

This is Bowman-Birk type major trypsin inhibitor from Setaria italica (Foxtail millet).